A 544-amino-acid chain; its full sequence is Chaperonin GroEL 1 (544 aa).

Residues 29–32 (TLGP), 86–90 (DGTTT), glycine 413, 479–481 (NAA), and aspartate 495 contribute to the ATP site.

It belongs to the chaperonin (HSP60) family. In terms of assembly, forms a cylinder of 14 subunits composed of two heptameric rings stacked back-to-back. Interacts with the co-chaperonin GroES.

The protein localises to the cytoplasm. It carries out the reaction ATP + H2O + a folded polypeptide = ADP + phosphate + an unfolded polypeptide.. Functionally, together with its co-chaperonin GroES, plays an essential role in assisting protein folding. The GroEL-GroES system forms a nano-cage that allows encapsulation of the non-native substrate proteins and provides a physical environment optimized to promote and accelerate protein folding. The sequence is that of Chaperonin GroEL 1 from Trichormus variabilis (strain ATCC 29413 / PCC 7937) (Anabaena variabilis).